A 235-amino-acid polypeptide reads, in one-letter code: tRNA (adenine(37)-N6)-methyltransferase (235 aa).

Residues 6–147 (FEQIGVIRSP…YLPFAESLPD (142 aa)) enclose the TsaA-like domain. Residues 23–25 (PRQ), 64–65 (HQ), R92, and 127–130 (VDGT) each bind S-adenosyl-L-methionine.

This sequence belongs to the tRNA methyltransferase O family. In terms of assembly, homodimer.

The catalysed reaction is N(6)-L-threonylcarbamoyladenosine(37) in tRNA + S-adenosyl-L-methionine = N(6)-methyl,N(6)-L-threonylcarbamoyladenosine(37) in tRNA + S-adenosyl-L-homocysteine + H(+). Functionally, S-adenosyl-L-methionine-dependent methyltransferase responsible for the addition of the methyl group in the formation of N6-methyl-N6-threonylcarbamoyladenosine at position 37 (m(6)t(6)A37) of the tRNA anticodon loop of tRNA(Thr)(GGU) that read codons starting with adenosine. The methyl group of m(6)t(6)A37 appears to slightly improve the efficiency of the tRNA decoding ability. The chain is tRNA (adenine(37)-N6)-methyltransferase from Escherichia coli (strain K12).